Consider the following 81-residue polypeptide: Control protein C.BamHI (81 aa).

The HTH cro/C1-type domain maps to Val13–Leu68. A DNA-binding region (H-T-H motif) is located at residues Gln25 to Arg44.

Its function is as follows. May help modulate methylase (M) and restriction enzyme (R) expression as cells undergo physiological changes such as sporulation or transformation. The chain is Control protein C.BamHI from Bacillus amyloliquefaciens (Bacillus velezensis).